The primary structure comprises 118 residues: U-scoloptoxin(05)-Cw1a (118 aa).

An N-terminal signal peptide occupies residues 1–22 (MNPLNLSTFIVFTLFAASATTA).

It belongs to the scoloptoxin-05 family. In terms of processing, contains 5 disulfide bonds. Expressed by the venom gland.

It localises to the secreted. This Cormocephalus westwoodi (Westwood's green centipede) protein is U-scoloptoxin(05)-Cw1a.